Consider the following 199-residue polypeptide: Adenine phosphoribosyltransferase (199 aa).

This sequence belongs to the purine/pyrimidine phosphoribosyltransferase family. In terms of assembly, homodimer.

It is found in the cytoplasm. The catalysed reaction is AMP + diphosphate = 5-phospho-alpha-D-ribose 1-diphosphate + adenine. Its pathway is purine metabolism; AMP biosynthesis via salvage pathway; AMP from adenine: step 1/1. In terms of biological role, catalyzes a salvage reaction resulting in the formation of AMP, that is energically less costly than de novo synthesis. The protein is Adenine phosphoribosyltransferase of Rhodopseudomonas palustris (strain BisB18).